Reading from the N-terminus, the 196-residue chain is DNA replication complex GINS protein PSF1 (196 aa).

Belongs to the GINS1/PSF1 family. As to quaternary structure, component of the GINS complex which is a heterotetramer of GINS1, GINS2, GINS3 and GINS4. Forms a stable subcomplex with GINS4. GINS complex interacts with DNA primase in vitro. Component of the CMG helicase complex, a hexameric ring of related MCM2-7 subunits stabilized by CDC45 and the tetrameric GINS complex.

Its subcellular location is the nucleus. The protein localises to the chromosome. Required for correct functioning of the GINS complex, a complex that plays an essential role in the initiation of DNA replication, and progression of DNA replication forks. GINS complex is a core component of CDC45-MCM-GINS (CMG) helicase, the molecular machine that unwinds template DNA during replication, and around which the replisome is built. The sequence is that of DNA replication complex GINS protein PSF1 (GINS1) from Bos taurus (Bovine).